The primary structure comprises 134 residues: DNA-directed RNA polymerase subunit omega (134 aa).

A disordered region spans residues I77–V108. Over residues A85–S97 the composition is skewed to low complexity.

This sequence belongs to the RNA polymerase subunit omega family. As to quaternary structure, the RNAP catalytic core consists of 2 alpha, 1 beta, 1 beta' and 1 omega subunit. When a sigma factor is associated with the core the holoenzyme is formed, which can initiate transcription.

The catalysed reaction is RNA(n) + a ribonucleoside 5'-triphosphate = RNA(n+1) + diphosphate. In terms of biological role, promotes RNA polymerase assembly. Latches the N- and C-terminal regions of the beta' subunit thereby facilitating its interaction with the beta and alpha subunits. The sequence is that of DNA-directed RNA polymerase subunit omega from Rhizobium rhizogenes (strain K84 / ATCC BAA-868) (Agrobacterium radiobacter).